The sequence spans 216 residues: Small ribosomal subunit protein uS3 (216 aa).

A KH type-2 domain is found at 24-93; that stretch reads IKEFLEYRLA…NPQIDVIDVS (70 aa).

This sequence belongs to the universal ribosomal protein uS3 family. As to quaternary structure, part of the 30S ribosomal subunit.

Its function is as follows. Binds the lower part of the 30S subunit head. This Pyrobaculum calidifontis (strain DSM 21063 / JCM 11548 / VA1) protein is Small ribosomal subunit protein uS3.